A 588-amino-acid chain; its full sequence is Sulfite reductase [NADPH] hemoprotein beta-component (588 aa).

Cys-442, Cys-448, Cys-487, and Cys-491 together coordinate [4Fe-4S] cluster. Residue Cys-491 coordinates siroheme.

Belongs to the nitrite and sulfite reductase 4Fe-4S domain family. In terms of assembly, alpha(8)-beta(8). The alpha component is a flavoprotein, the beta component is a hemoprotein. Siroheme serves as cofactor. Requires [4Fe-4S] cluster as cofactor.

It catalyses the reaction hydrogen sulfide + 3 NADP(+) + 3 H2O = sulfite + 3 NADPH + 4 H(+). The protein operates within sulfur metabolism; hydrogen sulfide biosynthesis; hydrogen sulfide from sulfite (NADPH route): step 1/1. Component of the sulfite reductase complex that catalyzes the 6-electron reduction of sulfite to sulfide. This is one of several activities required for the biosynthesis of L-cysteine from sulfate. The polypeptide is Sulfite reductase [NADPH] hemoprotein beta-component (Actinobacillus pleuropneumoniae serotype 5b (strain L20)).